Here is a 450-residue protein sequence, read N- to C-terminus: Asparagine--tRNA ligase (450 aa).

Belongs to the class-II aminoacyl-tRNA synthetase family. As to quaternary structure, homodimer.

It localises to the cytoplasm. The enzyme catalyses tRNA(Asn) + L-asparagine + ATP = L-asparaginyl-tRNA(Asn) + AMP + diphosphate + H(+). The chain is Asparagine--tRNA ligase from Metamycoplasma arthritidis (strain 158L3-1) (Mycoplasma arthritidis).